Here is a 154-residue protein sequence, read N- to C-terminus: Small ribosomal subunit protein bS16 (154 aa).

A compositionally biased stretch (low complexity) spans 111–121 (AAAGLAEAPTK). Residues 111–154 (AAAGLAEAPTKPAKKAAKAEAAPKTDEAAPKTEEQAGAGSGEQG) are disordered. Basic and acidic residues predominate over residues 127 to 144 (AKAEAAPKTDEAAPKTEE).

This sequence belongs to the bacterial ribosomal protein bS16 family.

This Salinispora tropica (strain ATCC BAA-916 / DSM 44818 / JCM 13857 / NBRC 105044 / CNB-440) protein is Small ribosomal subunit protein bS16.